The chain runs to 405 residues: Probable glucan 1,3-beta-glucosidase A (405 aa).

The signal sequence occupies residues 1–26 (MFPRISQAAILAHSLLAVCTSAATLA). The active-site Proton donor is the glutamate 198. Disulfide bonds link cysteine 278–cysteine 403 and cysteine 304–cysteine 330. The active-site Nucleophile is glutamate 296.

The protein belongs to the glycosyl hydrolase 5 (cellulase A) family. As to quaternary structure, monomer. Requires Mn(2+) as cofactor.

It localises to the secreted. The enzyme catalyses Successive hydrolysis of beta-D-glucose units from the non-reducing ends of (1-&gt;3)-beta-D-glucans, releasing alpha-glucose.. Its function is as follows. Beta-glucanases participate in the metabolism of beta-glucan, the main structural component of the cell wall. It could also function biosynthetically as a transglycosylase. The sequence is that of Probable glucan 1,3-beta-glucosidase A (exgA) from Emericella nidulans (strain FGSC A4 / ATCC 38163 / CBS 112.46 / NRRL 194 / M139) (Aspergillus nidulans).